The sequence spans 251 residues: Probable caffeoyl-CoA O-methyltransferase 3 (251 aa).

S-adenosyl-L-methionine-binding positions include Thr-61, Asp-83, 85 to 86, Ser-91, Asp-109, and Ala-138; that span reads GV. Asp-160 serves as a coordination point for a divalent metal cation. Residue Asp-162 participates in S-adenosyl-L-methionine binding. A divalent metal cation-binding residues include Asp-186 and Asn-187.

The protein belongs to the class I-like SAM-binding methyltransferase superfamily. Cation-dependent O-methyltransferase family. CCoAMT subfamily.

It catalyses the reaction (E)-caffeoyl-CoA + S-adenosyl-L-methionine = (E)-feruloyl-CoA + S-adenosyl-L-homocysteine + H(+). The chain is Probable caffeoyl-CoA O-methyltransferase 3 (omt1) from Dictyostelium discoideum (Social amoeba).